The chain runs to 315 residues: Olfactory receptor 10H2 (315 aa).

Over 1–25 the chain is Extracellular; it reads MLGLNHTSMSEFILVGFSAFPHLQL. N-linked (GlcNAc...) asparagine glycosylation occurs at Asn5. A helical membrane pass occupies residues 26 to 46; sequence MLFLLFLLMYLFTLLGNLLIM. The Cytoplasmic portion of the chain corresponds to 47–54; that stretch reads ATVWSERS. Residues 55 to 75 traverse the membrane as a helical segment; the sequence is LHTPMYLFLCVLSVSEILYTV. The Extracellular segment spans residues 76–99; the sequence is AIIPRMLADLLSTQRSIAFLACAS. Cys97 and Cys189 form a disulfide bridge. Residues 100 to 120 traverse the membrane as a helical segment; that stretch reads QMFFSFSFGFTHSFLLTVMGY. Residues 121–139 are Cytoplasmic-facing; that stretch reads DRYVAICHPLRYNVLMSPR. Residues 140 to 160 form a helical membrane-spanning segment; the sequence is GCACLVGCSWAGGSVMGMVVT. Over 161 to 197 the chain is Extracellular; that stretch reads SAIFQLTFCGSHEIQHFLCHVPPLLKLACGNNVPAVA. A helical membrane pass occupies residues 198-218; sequence LGVGLVCIMALLGCFLLILLS. Residues 219–238 are Cytoplasmic-facing; sequence YAFIVADILKIPSAEGRNKA. The chain crosses the membrane as a helical span at residues 239–259; the sequence is FSTCASHLIVVIVHYGFASVI. Residues 260–272 are Extracellular-facing; that stretch reads YLKPKGPHSQEGD. Residues 273-293 traverse the membrane as a helical segment; sequence TLMATTYAVLTPFLSPIIFSL. Topologically, residues 294 to 315 are cytoplasmic; the sequence is RNKELKVAMKRTFLSTLYSSGT.

The protein belongs to the G-protein coupled receptor 1 family.

It localises to the cell membrane. In terms of biological role, odorant receptor. This chain is Olfactory receptor 10H2 (OR10H2), found in Homo sapiens (Human).